A 311-amino-acid chain; its full sequence is Porphobilinogen deaminase (311 aa).

At Cys243 the chain carries S-(dipyrrolylmethanemethyl)cysteine.

This sequence belongs to the HMBS family. In terms of assembly, monomer. It depends on dipyrromethane as a cofactor.

It catalyses the reaction 4 porphobilinogen + H2O = hydroxymethylbilane + 4 NH4(+). The protein operates within porphyrin-containing compound metabolism; protoporphyrin-IX biosynthesis; coproporphyrinogen-III from 5-aminolevulinate: step 2/4. Tetrapolymerization of the monopyrrole PBG into the hydroxymethylbilane pre-uroporphyrinogen in several discrete steps. In Aliivibrio fischeri (strain ATCC 700601 / ES114) (Vibrio fischeri), this protein is Porphobilinogen deaminase.